Consider the following 108-residue polypeptide: Thiosulfate sulfurtransferase GlpE (108 aa).

Residues 18–106 (ENEGATLADI…WERSGLPIET (89 aa)) enclose the Rhodanese domain. Cysteine 66 (cysteine persulfide intermediate) is an active-site residue.

This sequence belongs to the GlpE family.

Its subcellular location is the cytoplasm. The catalysed reaction is thiosulfate + hydrogen cyanide = thiocyanate + sulfite + 2 H(+). It carries out the reaction thiosulfate + [thioredoxin]-dithiol = [thioredoxin]-disulfide + hydrogen sulfide + sulfite + 2 H(+). In terms of biological role, transferase that catalyzes the transfer of sulfur from thiosulfate to thiophilic acceptors such as cyanide or dithiols. May function in a CysM-independent thiosulfate assimilation pathway by catalyzing the conversion of thiosulfate to sulfite, which can then be used for L-cysteine biosynthesis. The protein is Thiosulfate sulfurtransferase GlpE of Actinobacillus pleuropneumoniae serotype 7 (strain AP76).